The chain runs to 332 residues: Leucine carboxyl methyltransferase 1 (332 aa).

Residues 1–23 (MAASLRRPSFTTCSSPTDTDDEG) are disordered. S-adenosyl-L-methionine contacts are provided by residues arginine 71, glycine 96, aspartate 120, 169–170 (DL), and glutamate 196.

The protein belongs to the methyltransferase superfamily. LCMT family.

The enzyme catalyses [phosphatase 2A protein]-C-terminal L-leucine + S-adenosyl-L-methionine = [phosphatase 2A protein]-C-terminal L-leucine methyl ester + S-adenosyl-L-homocysteine. Its function is as follows. Methylates the carboxyl group of the C-terminal leucine residue of protein phosphatase 2A catalytic subunits to form alpha-leucine ester residues. This Bos taurus (Bovine) protein is Leucine carboxyl methyltransferase 1 (LCMT1).